We begin with the raw amino-acid sequence, 352 residues long: Protein-glutamate methylesterase/protein-glutamine glutaminase 2 (352 aa).

Positions 1-116 constitute a Response regulatory domain; sequence MVVDDSAVVR…KQFLTDSADE (116 aa). D50 is subject to 4-aspartylphosphate. The region spanning 162 to 352 is the CheB-type methylesterase domain; sequence AQTTERIVAI…MAREIVTQLQ (191 aa). Residues S174, H200, and D296 contribute to the active site.

This sequence belongs to the CheB family. In terms of processing, phosphorylated by CheA. Phosphorylation of the N-terminal regulatory domain activates the methylesterase activity.

It is found in the cytoplasm. It catalyses the reaction [protein]-L-glutamate 5-O-methyl ester + H2O = L-glutamyl-[protein] + methanol + H(+). The catalysed reaction is L-glutaminyl-[protein] + H2O = L-glutamyl-[protein] + NH4(+). In terms of biological role, involved in chemotaxis. Part of a chemotaxis signal transduction system that modulates chemotaxis in response to various stimuli. Catalyzes the demethylation of specific methylglutamate residues introduced into the chemoreceptors (methyl-accepting chemotaxis proteins or MCP) by CheR. Also mediates the irreversible deamidation of specific glutamine residues to glutamic acid. In Xanthomonas axonopodis pv. citri (strain 306), this protein is Protein-glutamate methylesterase/protein-glutamine glutaminase 2.